The following is a 334-amino-acid chain: Beta-ketoacyl-[acyl-carrier-protein] synthase III (334 aa).

Active-site residues include Cys-114 and His-260. The interval 261–265 is ACP-binding; the sequence is QANLR. Asn-290 is an active-site residue.

This sequence belongs to the thiolase-like superfamily. FabH family. In terms of assembly, homodimer.

It localises to the cytoplasm. It carries out the reaction malonyl-[ACP] + acetyl-CoA + H(+) = 3-oxobutanoyl-[ACP] + CO2 + CoA. The protein operates within lipid metabolism; fatty acid biosynthesis. In terms of biological role, catalyzes the condensation reaction of fatty acid synthesis by the addition to an acyl acceptor of two carbons from malonyl-ACP. Catalyzes the first condensation reaction which initiates fatty acid synthesis and may therefore play a role in governing the total rate of fatty acid production. Possesses both acetoacetyl-ACP synthase and acetyl transacylase activities. Its substrate specificity determines the biosynthesis of branched-chain and/or straight-chain of fatty acids. In Clostridium tetani (strain Massachusetts / E88), this protein is Beta-ketoacyl-[acyl-carrier-protein] synthase III.